We begin with the raw amino-acid sequence, 1158 residues long: ATP-dependent helicase/deoxyribonuclease subunit B (1158 aa).

Residue 8-15 participates in ATP binding; it reads GRAGTGKS. [4Fe-4S] cluster is bound by residues C791, C1112, C1115, and C1121.

Belongs to the helicase family. AddB/RexB type 1 subfamily. As to quaternary structure, heterodimer of AddA and AddB. Mg(2+) is required as a cofactor. Requires [4Fe-4S] cluster as cofactor.

In terms of biological role, the heterodimer acts as both an ATP-dependent DNA helicase and an ATP-dependent, dual-direction single-stranded exonuclease. Recognizes the chi site generating a DNA molecule suitable for the initiation of homologous recombination. The AddB subunit has 5' -&gt; 3' nuclease activity but not helicase activity. The polypeptide is ATP-dependent helicase/deoxyribonuclease subunit B (Clostridium perfringens (strain SM101 / Type A)).